The following is a 228-amino-acid chain: Sec-independent protein translocase protein TatB (228 aa).

The helical transmembrane segment at 1 to 21 threads the bilayer; it reads MFDFGLGELVFVGIIALIVLG. 2 disordered regions span residues 109–162 and 197–228; these read DFGV…AETD and PHTT…VRKS. The span at 206–228 shows a compositional bias: basic residues; the sequence is AISRKRDFRPKHRAKPKLRVRKS.

This sequence belongs to the TatB family. In terms of assembly, the Tat system comprises two distinct complexes: a TatABC complex, containing multiple copies of TatA, TatB and TatC subunits, and a separate TatA complex, containing only TatA subunits. Substrates initially bind to the TatABC complex, which probably triggers association of the separate TatA complex to form the active translocon.

The protein localises to the cell inner membrane. Functionally, part of the twin-arginine translocation (Tat) system that transports large folded proteins containing a characteristic twin-arginine motif in their signal peptide across membranes. Together with TatC, TatB is part of a receptor directly interacting with Tat signal peptides. TatB may form an oligomeric binding site that transiently accommodates folded Tat precursor proteins before their translocation. In Neisseria meningitidis serogroup B (strain ATCC BAA-335 / MC58), this protein is Sec-independent protein translocase protein TatB.